The chain runs to 598 residues: Thiol:disulfide interchange protein DsbD (598 aa).

The first 21 residues, 1-21, serve as a signal peptide directing secretion; sequence MRALLTFFVAGLLVLSSPAMA. A disulfide bond links Cys130 and Cys136. A disordered region spans residues 158–180; sequence TMPTQTASPLDTSTANTSTPQPL. The span at 159–180 shows a compositional bias: polar residues; sequence MPTQTASPLDTSTANTSTPQPL. 8 helical membrane-spanning segments follow: residues 198–220, 240–262, 274–296, 324–346, 353–375, 385–407, 414–431, and 446–468; these read LLFL…YPIL, LVYV…SAGL, LIGL…TLQL, AISG…LYVA, TGGV…VAVF, GWMD…FLLE, WSTA…GWLY, and AVGI…YWFA. The cysteines at positions 212 and 333 are disulfide-linked. The Thioredoxin domain maps to 456 to 598; it reads FASAQPALNY…FLEHIQRISN (143 aa). Cysteines 513 and 516 form a disulfide.

It belongs to the thioredoxin family. DsbD subfamily.

The protein localises to the cell inner membrane. It catalyses the reaction [protein]-dithiol + NAD(+) = [protein]-disulfide + NADH + H(+). The catalysed reaction is [protein]-dithiol + NADP(+) = [protein]-disulfide + NADPH + H(+). Required to facilitate the formation of correct disulfide bonds in some periplasmic proteins and for the assembly of the periplasmic c-type cytochromes. Acts by transferring electrons from cytoplasmic thioredoxin to the periplasm. This transfer involves a cascade of disulfide bond formation and reduction steps. The polypeptide is Thiol:disulfide interchange protein DsbD (Vibrio vulnificus (strain YJ016)).